We begin with the raw amino-acid sequence, 283 residues long: Bifunctional protein FolD 2 (283 aa).

Residues 165-167, threonine 192, and valine 233 contribute to the NADP(+) site; that span reads GRG.

This sequence belongs to the tetrahydrofolate dehydrogenase/cyclohydrolase family. As to quaternary structure, homodimer.

It catalyses the reaction (6R)-5,10-methylene-5,6,7,8-tetrahydrofolate + NADP(+) = (6R)-5,10-methenyltetrahydrofolate + NADPH. The enzyme catalyses (6R)-5,10-methenyltetrahydrofolate + H2O = (6R)-10-formyltetrahydrofolate + H(+). It participates in one-carbon metabolism; tetrahydrofolate interconversion. Functionally, catalyzes the oxidation of 5,10-methylenetetrahydrofolate to 5,10-methenyltetrahydrofolate and then the hydrolysis of 5,10-methenyltetrahydrofolate to 10-formyltetrahydrofolate. This is Bifunctional protein FolD 2 from Nocardioides sp. (strain ATCC BAA-499 / JS614).